We begin with the raw amino-acid sequence, 585 residues long: MPVLSEDSGLHETLALLTSQLRPDSNHKEEMGFLRDVFSEKSLSYLMKIHEKLRYYERQSPTPVLHSAVALAEDVMEELQAASVHSDERELLQLLSTPHLRAVLMVHDTVAQKNFDPVLPPLPDNIDEDFDEESVKIVRLVKNKEPLGATIRRDEHSGAVVVARIMRGGAADRSGLVHVGDELREVNGIAVLHKRPDEISQILAQSQGSITLKIIPATQEEDRLKESKVFMRALFHYNPREDRAIPCQEAGLPFQRRQVLEVVSQDDPTWWQAKRVGDTNLRAGLIPSKGFQERRLSYRRAAGTLPSPQSLRKPPYDQPCDKETCDCEGYLKGHYVAGLRRSFRLGCRERLGGSQEGKMSSGAESPELLTYEEVARYQHQPGERPRLVVLIGSLGARLHELKQKVVAENPQHFGVAVPHTTRPRKSHEKEGVEYHFVSKQAFEADLHHNKFLEHGEYKENLYGTSLEAIQAVMAKNKVCLVDVEPEALKQLRTSEFKPYIIFVKPAIQEKRKTPPMSPACEDTAAPFDEQQQEMAASAAFIDRHYGHLVDAVLVKEDLQGAYSQLKVVLEKLSKDTHWVPVSWVR.

2 L27 domains span residues 6–60 (EDSG…ERQS) and 61–118 (PTPV…FDPV). In terms of domain architecture, PDZ spans 137–212 (IVRLVKNKEP…LAQSQGSITL (76 aa)). The SH3 domain maps to 226–296 (ESKVFMRALF…PSKGFQERRL (71 aa)). At S307 the chain carries Phosphoserine. The 186-residue stretch at 385 to 570 (PRLVVLIGSL…AYSQLKVVLE (186 aa)) folds into the Guanylate kinase-like domain.

It belongs to the MAGUK family. As to quaternary structure, interacts with HTR2C; this interaction stabilizes the receptor at the plasma membrane and prevents the desensitization of the HTR2C receptor-mediated calcium response. Interacts with HTR2A. Interacts with HTR4. Interacts (via PDZ domain) with CADM1 (via C-terminus)Interacts (via PDZ domain) with CADM1; this interaction connects CADM1 with DLG1. Interacts (via Guanylate kinase-like domain) with PALS1. Interacts with DLG1 (via N-terminus); this interaction connects CADM1 with DLG1 and links CADM1 with the regulatory subunit of phosphoinositide-3-kinase (PI3K) by forming a multiprotein complex and participates in cell spreading. As to expression, expressed in retina (at protein level) at the subapical region (SAR) adjacent to adherens junctions at the OLM, and at the OPL.

The protein resides in the cell membrane. Its subcellular location is the apical cell membrane. It is found in the cell junction. The protein localises to the adherens junction. Participates in cell spreading through the phosphoinositide-3-kinase (PI3K) pathway by connecting CADM1 to DLG1 and the regulatory subunit of phosphoinositide-3-kinase (PI3K). Stabilizes HTR2C at the plasma membrane and prevents its desensitization. May participates in the maintenance of adherens junctions. The protein is MAGUK p55 subfamily member 3 of Homo sapiens (Human).